Here is a 194-residue protein sequence, read N- to C-terminus: MKLLHLDSSALGATSISRELSAAIVAQQRRLYPEVEVTYRDLDRDPIPHLTAQTLAQTDPAEAAAAEAVMQQFLQAEVIVIGAPMYNFAIPSTLKAWIDRIAVAGRTFHYTANGPEGLAGGKRLIIASARGGVYAEPSNDFQEPYLRQLFGFLGIDDITLVRAEGVAYSPQHRADALAAALAGLCAEQDAAVMA.

Residues Ser9, 15–17 (SIS), and 85–88 (MYNF) each bind FMN.

The protein belongs to the azoreductase type 1 family. Homodimer. The cofactor is FMN.

It catalyses the reaction 2 a quinone + NADH + H(+) = 2 a 1,4-benzosemiquinone + NAD(+). The catalysed reaction is N,N-dimethyl-1,4-phenylenediamine + anthranilate + 2 NAD(+) = 2-(4-dimethylaminophenyl)diazenylbenzoate + 2 NADH + 2 H(+). Quinone reductase that provides resistance to thiol-specific stress caused by electrophilic quinones. In terms of biological role, also exhibits azoreductase activity. Catalyzes the reductive cleavage of the azo bond in aromatic azo compounds to the corresponding amines. The chain is FMN-dependent NADH:quinone oxidoreductase from Xanthomonas oryzae pv. oryzae (strain MAFF 311018).